The chain runs to 847 residues: Glycogen phosphorylase, liver form (847 aa).

A2 carries the post-translational modification N-acetylalanine. The residue at position 15 (S15) is a Phosphoserine; by PHK; in form phosphorylase a. AMP-binding positions include 43-45 (DRN), Y76, and R310. Residue K364 is modified to N6-succinyllysine. K470 is subject to N6-acetyllysine. S524, S561, and S639 each carry phosphoserine. Position 681 is an N6-(pyridoxal phosphate)lysine (K681). K796 bears the N6-acetyllysine mark.

It belongs to the glycogen phosphorylase family. Homodimer; enzymatically active. Interacts with PPP1R3B; recruits the phosphatase PP1 which dephosphorylates and inactivates PYGL/glycogen phosphorylase. It depends on pyridoxal 5'-phosphate as a cofactor. Post-translationally, acetylation, which is up-regulated by glucose and insulin and down-regulated by glucagon, inhibits the glycogen phosphorylase activity by promoting PPP1R3B-mediated recruitment of phosphatase PP1 and Ser-15 dephosphorylation. Phosphorylation at Ser-15 converts inactive phosphorylase b into active phosphorylase a. Dephosphorylation of Ser-15 by phosphatase PP1 inactivates the enzyme.

The protein localises to the cytoplasm. The protein resides in the cytosol. The enzyme catalyses [(1-&gt;4)-alpha-D-glucosyl](n) + phosphate = [(1-&gt;4)-alpha-D-glucosyl](n-1) + alpha-D-glucose 1-phosphate. Its activity is regulated as follows. Allosterically regulated through the non-covalent binding of metabolites, being activated by AMP and inhibited by ATP, ADP, and glucose-6-phosphate. The activity is also controlled by post-translational modifications including phosphorylation and acetylation. Allosteric enzyme that catalyzes the rate-limiting step in glycogen catabolism, the phosphorolytic cleavage of glycogen to produce glucose-1-phosphate, and plays a central role in maintaining cellular and organismal glucose homeostasis. This Homo sapiens (Human) protein is Glycogen phosphorylase, liver form.